Reading from the N-terminus, the 208-residue chain is MARYRGPVEKIERRFGVSLNLKGERRLAGKSALEKRPYAPGQHGQRRKKVSEYGLQLNEKQKAKFMYGVSEKQFRALFVEAKRREGNTGTNLVTLIEQRLDNVVYRMGFATTRRFARQLVTHGHLLVDGAKLDIPSYRVRPGQKIEIRESSKNNSQIVRALELTNQTGLAPWVDIDADKKFGIFTRLPEREEVVIPVEERLIVELYSK.

Residues 98 to 160 (QRLDNVVYRM…SKNNSQIVRA (63 aa)) enclose the S4 RNA-binding domain.

Belongs to the universal ribosomal protein uS4 family. In terms of assembly, part of the 30S ribosomal subunit. Contacts protein S5. The interaction surface between S4 and S5 is involved in control of translational fidelity.

One of the primary rRNA binding proteins, it binds directly to 16S rRNA where it nucleates assembly of the body of the 30S subunit. In terms of biological role, with S5 and S12 plays an important role in translational accuracy. This chain is Small ribosomal subunit protein uS4, found in Sulfurimonas denitrificans (strain ATCC 33889 / DSM 1251) (Thiomicrospira denitrificans (strain ATCC 33889 / DSM 1251)).